A 391-amino-acid chain; its full sequence is Acetyl-CoA acetyltransferase (391 aa).

The active-site Acyl-thioester intermediate is the Cys88. Active-site proton acceptor residues include His347 and Cys377.

Belongs to the thiolase-like superfamily. Thiolase family. As to quaternary structure, homotetramer.

It localises to the cytoplasm. The enzyme catalyses 2 acetyl-CoA = acetoacetyl-CoA + CoA. Its pathway is metabolic intermediate biosynthesis; (R)-mevalonate biosynthesis; (R)-mevalonate from acetyl-CoA: step 1/3. This is Acetyl-CoA acetyltransferase (phaA) from Paracoccus denitrificans.